The following is a 275-amino-acid chain: Phosphate import ATP-binding protein PstB 1 (275 aa).

The region spanning 22–261 is the ABC transporter domain; the sequence is FNVEGVKVYY…SPTEQMFNSP (240 aa). ATP is bound at residue 54–61; the sequence is GPSGCGKS.

Belongs to the ABC transporter superfamily. Phosphate importer (TC 3.A.1.7) family. In terms of assembly, the complex is composed of two ATP-binding proteins (PstB), two transmembrane proteins (PstC and PstA) and a solute-binding protein (PstS).

Its subcellular location is the cell inner membrane. The catalysed reaction is phosphate(out) + ATP + H2O = ADP + 2 phosphate(in) + H(+). Functionally, part of the ABC transporter complex PstSACB involved in phosphate import. Responsible for energy coupling to the transport system. This Trichormus variabilis (strain ATCC 29413 / PCC 7937) (Anabaena variabilis) protein is Phosphate import ATP-binding protein PstB 1.